The chain runs to 514 residues: Histidine ammonia-lyase (514 aa).

Positions 146-148 (ASG) form a cross-link, 5-imidazolinone (Ala-Gly). S147 bears the 2,3-didehydroalanine (Ser) mark.

The protein belongs to the PAL/histidase family. In terms of processing, contains an active site 4-methylidene-imidazol-5-one (MIO), which is formed autocatalytically by cyclization and dehydration of residues Ala-Ser-Gly.

The protein localises to the cytoplasm. It catalyses the reaction L-histidine = trans-urocanate + NH4(+). Its pathway is amino-acid degradation; L-histidine degradation into L-glutamate; N-formimidoyl-L-glutamate from L-histidine: step 1/3. This Clostridium tetani (strain Massachusetts / E88) protein is Histidine ammonia-lyase.